The sequence spans 1218 residues: NACHT, LRR and PYD domains-containing protein 1 allele 2 (1218 aa).

The disordered stretch occupies residues 1 to 61; sequence MEESQSKQES…SLPGWSSTSK (61 aa). A compositionally biased stretch (polar residues) spans 7 to 29; that stretch reads KQESNTRVAQHGSQQDVDPTFQT. The NACHT domain occupies 175–484; the sequence is QLVIIEGAAG…EFFAAMSYIL (310 aa). 181-188 is an ATP binding site; sequence GAAGIGKS. LRR repeat units lie at residues 343–364, 673–693, and 730–750; these read KERN…LTLC, NLEE…RSLC, and RLAE…RQLC. Positions 799–815 are enriched in polar residues; it reads TMPTENTDGEESLTSSK. Positions 799–842 are disordered; sequence TMPTENTDGEESLTSSKQQQQQSGDKHMEPLGTDDDFWGPSGPV. Residues 835–968 are ZU5; it reads FWGPSGPVST…HFAVLENPSF (134 aa). Residues 835–1118 form the FIIND domain; that stretch reads FWGPSGPVST…LRPALPRMAS (284 aa). Positions 969–1118 are UPA; it reads SPMGVLLRMI…LRPALPRMAS (150 aa). In terms of domain architecture, CARD spans 1122–1211; sequence DAPALLHFVD…HLIMDLLEKS (90 aa).

This sequence belongs to the NLRP family. In terms of assembly, interacts (via LRR repeats) with BCL2 and BCL2L1 (via the loop between motifs BH4 and BH3). Interacts with NOD2; this interaction is enhanced in the presence of muramyl dipeptide (MDP) and increases IL1B release. Interacts with EIF2AK2/PKR; this interaction requires EIF2AK2 activity, is accompanied by EIF2AK2 autophosphorylation and promotes inflammasome assembly in response to danger-associated signals. Interacts with MEFV; this interaction targets Nlrp1a to degradation by autophagy, hence preventing excessive IL1B- and IL18-mediated inflammation. Interacts with DPP9; leading to inhibit activation of the inflammasome. DPP9 acts via formation of a ternary complex, composed of a DPP9 homodimer, one full-length NLRP1 protein, and one cleaved C-terminus of Nlrp1a (NACHT, LRR and PYD domains-containing protein 1a, C-terminus). Interacts with DPP8; leading to inhibit activation of the inflammasome, probably via formation of a ternary complex with DPP8. Interacts with the C-terminal part of Nlrp1a (NACHT, LRR and PYD domains-containing protein 1a, C-terminus) in absence of pathogens and other damage-associated signals. As to quaternary structure, interacts with the N-terminal part of Nlrp1a (NACHT, LRR and PYD domains-containing protein 1a, N-terminus) in absence of pathogens and other damage-associated signals. Homomultimer; forms the Nlrp1a inflammasome polymeric complex, a filament composed of homopolymers of this form in response to pathogens and other damage-associated signals. The Nlrp1a inflammasome polymeric complex directly recruits pro-caspase-1 (proCASP1) independently of PYCARD/ASC. Interacts (via CARD domain) with CASP1 (via CARD domain); leading to CASP1 activation. In terms of processing, autocatalytically cleaved. Autocatalytic cleavage in FIIND region occurs constitutively, prior to activation signals, and is required for inflammasome activity (IL1B release), possibly by facilitating CASP1 binding. Both N- and C-terminal parts remain associated non-covalently. (Microbial infection) Cleavage by B.anthracis lethal toxin (LT) endopeptidase promotes ubiquitination and degradation of the N-terminal part, releasing the cleaved C-terminal part of the protein (NACHT, LRR and PYD domains-containing protein 1a, C-terminus), which polymerizes and forms the Nlrp1a inflammasome. Post-translationally, ubiquitinated in response to pathogen-associated signals, leading to its degradation by the proteasome and subsequent release of the cleaved C-terminal part of the protein (NACHT, LRR and PYD domains-containing protein 1a, C-terminus), which polymerizes and forms the Nlrp1a inflammasome.

The protein localises to the cytoplasm. It is found in the cytosol. It localises to the nucleus. Its subcellular location is the inflammasome. Its activity is regulated as follows. Activated by cleavage by B.anthracis lethal toxin (LT) endopeptidase. Cleavage by LT promotes ubiquitination and degradation of the N-terminal part, releasing the cleaved C-terminal part of the protein (NACHT, LRR and PYD domains-containing protein 1a, C-terminus), which polymerizes and forms the Nlrp1a inflammasome. Nlrp1a inflammasome is inhibited by DPP8 and DPP9, which sequester the C-terminal fragment of Nlrp1a (NACHT, LRR and PYD domains-containing protein 1a, C-terminus) in a ternary complex, thereby preventing Nlrp1a oligomerization and activation. Nlrp1a inflammasome is weakly activated by Val-boroPro (Talabostat, PT-100), an inhibitor of dipeptidyl peptidases DPP8 and DPP9. Val-boroPro relieves inhibition of DPP8 and/or DPP9 by promoting disruption of the ternary complex, releasing its C-terminal part from autoinhibition. Weakly activated by Toxoplasma gondii. In terms of biological role, acts as the sensor component of the Nlrp1a inflammasome, which mediates inflammasome activation in response to various pathogen-associated signals, leading to subsequent pyroptosis. Inflammasomes are supramolecular complexes that assemble in the cytosol in response to pathogens and other damage-associated signals and play critical roles in innate immunity and inflammation. Acts as a recognition receptor (PRR): recognizes specific pathogens and other damage-associated signals, such as B.anthracis lethal toxin (LT) or Val-boroPro inhibitor, and mediates the formation of the inflammasome polymeric complex. In response to pathogen-associated signals, the N-terminal part of Nlrp1a is degraded by the proteasome, releasing the cleaved C-terminal part of the protein (NACHT, LRR and PYD domains-containing protein 1a, C-terminus), which polymerizes to initiate the formation of the inflammasome complex: the inflammasome directly recruits pro-caspase-1 (proCASP1) independently of PYCARD/ASC and promotes caspase-1 (CASP1) activation, which subsequently cleaves and activates inflammatory cytokines IL1B and IL18 and gasdermin-D (GSDMD), leading to pyroptosis. In the absence of GSDMD expression, the Nlrp1a inflammasome is able to recruit and activate CASP8, leading to activation of gasdermin-E (GSDME). Constitutes the precursor of the Nlrp1a inflammasome, which mediates autoproteolytic processing within the FIIND domain to generate the N-terminal and C-terminal parts, which are associated non-covalently in absence of pathogens and other damage-associated signals. Functionally, regulatory part that prevents formation of the Nlrp1a inflammasome: in absence of pathogens and other damage-associated signals, interacts with the C-terminal part of Nlrp1a (NACHT, LRR and PYD domains-containing protein 1a, C-terminus), preventing activation of the Nlrp1a inflammasome. In response to pathogen-associated signals, this part is ubiquitinated by the N-end rule pathway and degraded by the proteasome, releasing the cleaved C-terminal part of the protein, which polymerizes and forms the Nlrp1a inflammasome. Its function is as follows. Constitutes the active part of the Nlrp1a inflammasome. In absence of pathogens and other damage-associated signals, interacts with the N-terminal part of Nlrp1a (NACHT, LRR and PYD domains-containing protein 1a, N-terminus), preventing activation of the Nlrp1a inflammasome. In response to pathogen-associated signals, the N-terminal part of Nlrp1a is degraded by the proteasome, releasing this form, which polymerizes to form the Nlrp1a inflammasome complex: the Nlrp1a inflammasome complex then directly recruits pro-caspase-1 (proCASP1) and promotes caspase-1 (CASP1) activation, leading to gasdermin-D (GSDMD) cleavage and subsequent pyroptosis. The protein is NACHT, LRR and PYD domains-containing protein 1 allele 2 of Rattus norvegicus (Rat).